The chain runs to 933 residues: 2-oxoglutarate dehydrogenase E1 component (933 aa).

It belongs to the alpha-ketoglutarate dehydrogenase family. In terms of assembly, homodimer. Part of the 2-oxoglutarate dehydrogenase (OGDH) complex composed of E1 (2-oxoglutarate dehydrogenase), E2 (dihydrolipoamide succinyltransferase) and E3 (dihydrolipoamide dehydrogenase); the complex contains multiple copies of the three enzymatic components (E1, E2 and E3). It depends on thiamine diphosphate as a cofactor.

It catalyses the reaction N(6)-[(R)-lipoyl]-L-lysyl-[protein] + 2-oxoglutarate + H(+) = N(6)-[(R)-S(8)-succinyldihydrolipoyl]-L-lysyl-[protein] + CO2. Functionally, E1 component of the 2-oxoglutarate dehydrogenase (OGDH) complex which catalyzes the decarboxylation of 2-oxoglutarate, the first step in the conversion of 2-oxoglutarate to succinyl-CoA and CO(2). The sequence is that of 2-oxoglutarate dehydrogenase E1 component (sucA) from Rickettsia typhi (strain ATCC VR-144 / Wilmington).